Consider the following 421-residue polypeptide: Testin (421 aa).

One can recognise a PET domain in the interval 92 to 199; that stretch reads MILTNPVAAK…GDVKLPCEMD (108 aa). Residues 133–164 are disordered; that stretch reads EKQPVAGSEGAQYRKKQLAKQLPAHDQDPSKC. The segment covering 155-164 has biased composition (basic and acidic residues); it reads PAHDQDPSKC. LIM zinc-binding domains follow at residues 234 to 297, 299 to 359, and 362 to 421; these read YSCY…CDSE, PRCA…NHAV, and QGCH…KMMS.

This sequence belongs to the prickle / espinas / testin family. As to quaternary structure, interacts via LIM domain 1 with ZYX. Interacts (via LIM domain 3) with ENAH and VASP. Interacts with ALKBH4, talin, actin, alpha-actinin, GRIP1 and PXN. Interacts (via LIM domain 2) with ACTL7A (via N-terminus). Heterodimer with ACTL7A; the heterodimer interacts with ENAH to form a heterotrimer.

It localises to the cytoplasm. It is found in the cell junction. The protein resides in the focal adhesion. Functionally, scaffold protein that may play a role in cell adhesion, cell spreading and in the reorganization of the actin cytoskeleton. Plays a role in the regulation of cell proliferation. May act as a tumor suppressor. The polypeptide is Testin (TES) (Callithrix jacchus (White-tufted-ear marmoset)).